The sequence spans 474 residues: Protein nucleotidyltransferase YdiU (474 aa).

ATP-binding residues include glycine 89, glycine 91, arginine 92, lysine 112, aspartate 124, glycine 125, arginine 178, and arginine 185. Residue aspartate 262 is the Proton acceptor of the active site. Positions 263 and 272 each coordinate Mg(2+). Position 272 (aspartate 272) interacts with ATP.

The protein belongs to the SELO family. Mg(2+) is required as a cofactor. The cofactor is Mn(2+).

It catalyses the reaction L-seryl-[protein] + ATP = 3-O-(5'-adenylyl)-L-seryl-[protein] + diphosphate. It carries out the reaction L-threonyl-[protein] + ATP = 3-O-(5'-adenylyl)-L-threonyl-[protein] + diphosphate. The catalysed reaction is L-tyrosyl-[protein] + ATP = O-(5'-adenylyl)-L-tyrosyl-[protein] + diphosphate. The enzyme catalyses L-histidyl-[protein] + UTP = N(tele)-(5'-uridylyl)-L-histidyl-[protein] + diphosphate. It catalyses the reaction L-seryl-[protein] + UTP = O-(5'-uridylyl)-L-seryl-[protein] + diphosphate. It carries out the reaction L-tyrosyl-[protein] + UTP = O-(5'-uridylyl)-L-tyrosyl-[protein] + diphosphate. In terms of biological role, nucleotidyltransferase involved in the post-translational modification of proteins. It can catalyze the addition of adenosine monophosphate (AMP) or uridine monophosphate (UMP) to a protein, resulting in modifications known as AMPylation and UMPylation. This is Protein nucleotidyltransferase YdiU from Trichodesmium erythraeum (strain IMS101).